The primary structure comprises 658 residues: Glycogen debranching enzyme (658 aa).

The active-site Nucleophile is aspartate 336. Glutamate 371 acts as the Proton donor in catalysis. Residues 459–484 (EANGEENRDGTNSNYSDNHGKEGLGG) form a disordered region.

This sequence belongs to the glycosyl hydrolase 13 family.

The enzyme catalyses Hydrolysis of (1-&gt;6)-alpha-D-glucosidic linkages to branches with degrees of polymerization of three or four glucose residues in limit dextrin.. Its pathway is glycan degradation; glycogen degradation. Its function is as follows. Removes maltotriose and maltotetraose chains that are attached by 1,6-alpha-linkage to the limit dextrin main chain, generating a debranched limit dextrin. In Salmonella paratyphi A (strain ATCC 9150 / SARB42), this protein is Glycogen debranching enzyme.